The sequence spans 307 residues: Ornithine carbamoyltransferase (307 aa).

Carbamoyl phosphate contacts are provided by residues 51-54, Gln78, Arg102, and 129-132; these read STRT and HPVQ. L-ornithine contacts are provided by residues Asn159, Asp223, and 227–228; that span reads SM. Carbamoyl phosphate contacts are provided by residues 263-264 and Arg291; that span reads CL.

It belongs to the aspartate/ornithine carbamoyltransferase superfamily. OTCase family.

It is found in the cytoplasm. It carries out the reaction carbamoyl phosphate + L-ornithine = L-citrulline + phosphate + H(+). The protein operates within amino-acid biosynthesis; L-arginine biosynthesis; L-arginine from L-ornithine and carbamoyl phosphate: step 1/3. Functionally, reversibly catalyzes the transfer of the carbamoyl group from carbamoyl phosphate (CP) to the N(epsilon) atom of ornithine (ORN) to produce L-citrulline. The protein is Ornithine carbamoyltransferase of Wolinella succinogenes (strain ATCC 29543 / DSM 1740 / CCUG 13145 / JCM 31913 / LMG 7466 / NCTC 11488 / FDC 602W) (Vibrio succinogenes).